The chain runs to 353 residues: Quinolinate synthase (353 aa).

His47 and Ser68 together coordinate iminosuccinate. Cys113 contacts [4Fe-4S] cluster. Iminosuccinate contacts are provided by residues 139–141 and Ser156; that span reads YAN. [4Fe-4S] cluster is bound at residue Cys200. Residues 226–228 and Thr243 contribute to the iminosuccinate site; that span reads HPE. Cys297 lines the [4Fe-4S] cluster pocket.

Belongs to the quinolinate synthase family. Type 1 subfamily. Requires [4Fe-4S] cluster as cofactor.

It is found in the cytoplasm. It carries out the reaction iminosuccinate + dihydroxyacetone phosphate = quinolinate + phosphate + 2 H2O + H(+). Its pathway is cofactor biosynthesis; NAD(+) biosynthesis; quinolinate from iminoaspartate: step 1/1. Functionally, catalyzes the condensation of iminoaspartate with dihydroxyacetone phosphate to form quinolinate. The sequence is that of Quinolinate synthase from Photobacterium profundum (strain SS9).